The sequence spans 451 residues: Eukaryotic translation initiation factor 3 subunit E (451 aa).

Positions 245-425 (PFFNHEPARD…GTVVMNHPPS (181 aa)) constitute a PCI domain.

The protein belongs to the eIF-3 subunit E family. Component of the eukaryotic translation initiation factor 3 (eIF-3) complex.

The protein localises to the cytoplasm. In terms of biological role, component of the eukaryotic translation initiation factor 3 (eIF-3) complex, which is involved in protein synthesis of a specialized repertoire of mRNAs and, together with other initiation factors, stimulates binding of mRNA and methionyl-tRNAi to the 40S ribosome. The eIF-3 complex specifically targets and initiates translation of a subset of mRNAs involved in cell proliferation. The protein is Eukaryotic translation initiation factor 3 subunit E (int6) of Sclerotinia sclerotiorum (strain ATCC 18683 / 1980 / Ss-1) (White mold).